Here is an 85-residue protein sequence, read N- to C-terminus: Beta-defensin 18 (85 aa).

A signal peptide spans 1 to 23 (MQSTMKMFGIILMVIFSVSCGPS). 3 disulfide bridges follow: C39-C65, C46-C60, and C50-C66.

This sequence belongs to the beta-defensin family.

Its subcellular location is the secreted. In terms of biological role, has antibacterial activity. The sequence is that of Beta-defensin 18 (Defb18) from Mus musculus (Mouse).